The following is a 181-amino-acid chain: 28 kDa heat- and acid-stable phosphoprotein (181 aa).

Residues 1 to 14 (MPKGGRKGGHKGRV) are compositionally biased toward basic residues. Residues 1-118 (MPKGGRKGGH…RREREEIEKQ (118 aa)) form a disordered region. A Phosphothreonine modification is found at Thr-18. At Ser-19 the chain carries Phosphoserine. Basic and acidic residues predominate over residues 50–59 (DPKKEKKSLD). Lys-52 is covalently cross-linked (Glycyl lysine isopeptide (Lys-Gly) (interchain with G-Cter in SUMO2)). Phosphoserine occurs at positions 57, 60, and 63. Residues 60–69 (SDESEDEDDD) show a composition bias toward acidic residues. A Phosphotyrosine modification is found at Tyr-70. Over residues 102–118 (DGPKELSRREREEIEKQ) the composition is skewed to basic and acidic residues. Lys-126 bears the N6-methyllysine mark. Lys-132 and Lys-164 each carry N6-acetyllysine. Basic and acidic residues predominate over residues 151–167 (EEAARKKEEERKAKDDA). The tract at residues 151–181 (EEAARKKEEERKAKDDATLSGKRMQSLSLNK) is disordered. Phosphoserine is present on residues Ser-176 and Ser-178.

Belongs to the PDAP1 family. Phosphorylated by several kinases in vitro. In vivo, can be phosphorylated by CK2. In terms of tissue distribution, present in all tissues tested, including brain, lung, spleen, kidney, liver, heart, and muscle, in decreasing order of abundance.

The sequence is that of 28 kDa heat- and acid-stable phosphoprotein (Pdap1) from Rattus norvegicus (Rat).